The sequence spans 825 residues: MSRIRWRYGTAATALLVAAGLVPTATAHAEDVTDYSITVDPAAKGAAIDDTMYGVFFEDINRAADGGLYAELVQNRSFEYSTDDNRSYTPLTSWIVDGTGEVVNDAGRLNERNRNYLSLGAGSSVTNAGYNTGIRVEQGKRYDFSVWARAGSASTLTVALKDAAGTLATARQVAVEGGWAKYRATFTATRTSNRGRLAVAANDAAALDMVSLFPRDTYRNQQNGLRKDLAEKIAALHPGFVRFPGGCLVNTGSMEDYSAASGWQRKRSYQWKDTVGPVEERATNANFWGYNQSYGLGYYEYFRFSEDIGAMPLPVVPALVTGCGQNKAVDDEALLKRHIQDTLDLIEFANGPATSKWGKVRAEMGHPRPFRLTHLEVGNEENLPDEFFDRFKQFRAAIEAEYPDITVVSNSGPDDAGTTFDTAWKLNREANVEMVDEHYYNSPNWFLQNNDRYDSYDRGGPKVFLGEYASQGNAWKNGLSEAAFMTGLERNADVVKLASYAPLLANEDYVQWRPDLVWFNNRASWNSANYEVQKLFMNNVGDRVVPSKATTTPDVSGPITGAVGLSTWATGTAYDDVKVTAADGATLLSDDFSGDASKWTHTGAGSWSVQDGQYVQTDAAAENTMVQAGDPSWHDYDLHVKATKKSGKEGFLVAFGVKDTGNYYWWNLGGWNNTQSAVEQAVDGGKGTLLTKAGSIETGRAYDIDVKVRGRQVTLYLDGQEWGGFTDDKPAEPFRQVVTKDARTGDLIVKVVNAQPAEARTAIDLGGARVASTARVTTLAADQDAVNTETDAPVTPATSTFSGVTDRFTYTFPANSVTFLRLKQR.

Positions 1-29 (MSRIRWRYGTAATALLVAAGLVPTATAHA) are cleaved as a signal peptide. Glu-58 is a binding site for alpha-L-arabinofuranose. The CBM-cenC domain occupies 70 to 215 (AELVQNRSFE…ALDMVSLFPR (146 aa)). Alpha-L-arabinofuranose contacts are provided by residues Cys-247 and 379 to 380 (NE). Glu-380 acts as the Proton donor/acceptor in catalysis.

This sequence belongs to the glycosyl hydrolase 51 family.

The protein localises to the secreted. It carries out the reaction Hydrolysis of terminal non-reducing alpha-L-arabinofuranoside residues in alpha-L-arabinosides.. Involved in the degradation of arabinan and is a key enzyme in the complete degradation of the plant cell wall. Catalyzes the cleavage of terminal alpha-L-arabinofuranosyl residues of arabinan present in the arabinofuranosyl polysaccharides or oligosaccharides. It cannot act on other arabinose-containing polysaccharides and arabinoxylo-oligosaccharides. It leaves most of the polymer intact, including most of the main-chain residues and the arabinose side chains. It acts preferentially on the linear alpha-(1-&gt;2)-linked arabinofuranobiosides and alpha-(1-&gt;3)-linked arabinofuranobiosides, and is much less effective on alpha-(1-&gt;5)-linked arabinofuranobiosides. It also hydrolyzes the terminal alpha-(1-&gt;3)-linked arabinofuranotriosides in preference to the alpha-(1-&gt;5)-linked arabinofuranotriosides. This chain is Extracellular exo-alpha-L-arabinofuranosidase, found in Streptomyces chartreusis.